The sequence spans 1035 residues: Alpha-mannosidase B (1035 aa).

The first 20 residues, 1–20, serve as a signal peptide directing secretion; that stretch reads MGKVLILFLFVLLLITFINC. 2 N-linked (GlcNAc...) asparagine glycosylation sites follow: N19 and N30. Positions 47 and 49 each coordinate Zn(2+). Residue N63 is glycosylated (N-linked (GlcNAc...) asparagine). D161 lines the Zn(2+) pocket. D161 (nucleophile) is an active-site residue. N-linked (GlcNAc...) asparagine glycosylation is found at N245, N250, N270, N309, N327, and N438. Residue H446 coordinates Zn(2+). Residues N487, N497, N503, N710, N719, N735, N792, N852, N863, N880, N962, and N993 are each glycosylated (N-linked (GlcNAc...) asparagine).

The protein belongs to the glycosyl hydrolase 38 family. It depends on Zn(2+) as a cofactor.

Its subcellular location is the secreted. It carries out the reaction Hydrolysis of terminal, non-reducing alpha-D-mannose residues in alpha-D-mannosides.. This is Alpha-mannosidase B (manB) from Dictyostelium discoideum (Social amoeba).